We begin with the raw amino-acid sequence, 444 residues long: F-box protein At1g53790 (444 aa).

One can recognise an F-box domain in the interval 76 to 125; sequence VSCFRYIPIDLLMDIFSRVPAKSIARFRCVSKLWESILCRPDFKELFMTM.

The sequence is that of F-box protein At1g53790 from Arabidopsis thaliana (Mouse-ear cress).